A 313-amino-acid chain; its full sequence is METRVQHGSGSQALLQARRDSGRPHGEPDLRDVLTQQVHILSLDQIRAIRNTNEYTEGPTVAPRPGVKSAPRSASQPKSERPHGLPEHRHFGRVQHTQTHASPRAPLSRSISTVSTGSRSSTRTSTSSNSSEQRLLGSSSGPVADGIVRMQPKSELKSSELKPLSKEDLGAHSYRCEDCGKCKCKECTYPRTLPSCWICDKQCLCSAQNVVDYGTCVCCVKGLFYHCSNDDEDNCADNPCSCSQSHCCTRWSAMGVVSLFLPCLWCYLPAKGCLKLCQGCYDRVNRPGCRCKHSNTVCCKVPSVPPRNFEKPT.

A compositionally biased stretch (polar residues) spans 1-14 (METRVQHGSGSQAL). Disordered stretches follow at residues 1 to 31 (METRVQHGSGSQALLQARRDSGRPHGEPDLR) and 54 to 146 (EYTE…VADG). Basic and acidic residues-rich tracts occupy residues 17-31 (ARRDSGRPHGEPDLR) and 78-89 (KSERPHGLPEHR). The segment covering 108–131 (SRSISTVSTGSRSSTRTSTSSNSS) has biased composition (low complexity). Residues 132 to 141 (EQRLLGSSSG) are compositionally biased toward polar residues. One can recognise an SPR domain in the interval 175 to 289 (RCEDCGKCKC…CYDRVNRPGC (115 aa)).

It belongs to the sprouty family. Brain and interlimb region.

The protein localises to the cytoplasm. It localises to the membrane. Its function is as follows. Acts as an antagonist of FGF-induced retinal lens fiber differentiation. Inhibits TGFB-induced epithelial-to-mesenchymal transition in retinal lens epithelial cells. May play an important role in FGF-mediated patterning of the mid/hindbrain region by acting to modulate the signaling effects of FGF8. The sequence is that of Protein sprouty homolog 2 (SPRY2) from Gallus gallus (Chicken).